Reading from the N-terminus, the 304-residue chain is Acetylglutamate kinase (304 aa).

Substrate is bound by residues 82–83, R104, and N197; that span reads GG.

Belongs to the acetylglutamate kinase family. ArgB subfamily.

It is found in the cytoplasm. The enzyme catalyses N-acetyl-L-glutamate + ATP = N-acetyl-L-glutamyl 5-phosphate + ADP. It functions in the pathway amino-acid biosynthesis; L-arginine biosynthesis; N(2)-acetyl-L-ornithine from L-glutamate: step 2/4. In terms of biological role, catalyzes the ATP-dependent phosphorylation of N-acetyl-L-glutamate. The polypeptide is Acetylglutamate kinase (Prochlorococcus marinus (strain SARG / CCMP1375 / SS120)).